The sequence spans 339 residues: Glycerol-3-phosphate dehydrogenase [NAD(P)+] (339 aa).

S11, W12, and K109 together coordinate NADPH. The sn-glycerol 3-phosphate site is built by K109, G140, and S142. A144 contributes to the NADPH binding site. Sn-glycerol 3-phosphate-binding residues include K195, D249, S259, R260, and N261. K195 (proton acceptor) is an active-site residue. Position 260 (R260) interacts with NADPH. 2 residues coordinate NADPH: V284 and E286.

Belongs to the NAD-dependent glycerol-3-phosphate dehydrogenase family.

It is found in the cytoplasm. The enzyme catalyses sn-glycerol 3-phosphate + NAD(+) = dihydroxyacetone phosphate + NADH + H(+). It carries out the reaction sn-glycerol 3-phosphate + NADP(+) = dihydroxyacetone phosphate + NADPH + H(+). It participates in membrane lipid metabolism; glycerophospholipid metabolism. In terms of biological role, catalyzes the reduction of the glycolytic intermediate dihydroxyacetone phosphate (DHAP) to sn-glycerol 3-phosphate (G3P), the key precursor for phospholipid synthesis. The sequence is that of Glycerol-3-phosphate dehydrogenase [NAD(P)+] from Lactobacillus johnsonii (strain CNCM I-12250 / La1 / NCC 533).